A 431-amino-acid polypeptide reads, in one-letter code: Enolase (431 aa).

Position 166 (Gln166) interacts with (2R)-2-phosphoglycerate. The Proton donor role is filled by Glu208. The Mg(2+) site is built by Asp245, Glu288, and Asp315. (2R)-2-phosphoglycerate contacts are provided by Lys340, Arg369, Ser370, and Lys391. Lys340 serves as the catalytic Proton acceptor.

The protein belongs to the enolase family. Mg(2+) serves as cofactor.

The protein localises to the cytoplasm. It is found in the secreted. Its subcellular location is the cell surface. The catalysed reaction is (2R)-2-phosphoglycerate = phosphoenolpyruvate + H2O. Its pathway is carbohydrate degradation; glycolysis; pyruvate from D-glyceraldehyde 3-phosphate: step 4/5. Its function is as follows. Catalyzes the reversible conversion of 2-phosphoglycerate (2-PG) into phosphoenolpyruvate (PEP). It is essential for the degradation of carbohydrates via glycolysis. This chain is Enolase, found in Clostridium botulinum (strain Kyoto / Type A2).